We begin with the raw amino-acid sequence, 161 residues long: MSQLTHINAAGEAHMVDVSAKAETVREARAEAFVTMRSETLAMIVDGKHHKGDVFATARIAGIQAAKRTWELIPLCHPLLLSKVEIQLQAEPEHNRVRIESLCRLTGKTGVEMEALTAASVAALTIYDMCKAVQKDIVIGPVRLLAKSGGKSGDFKVDAHD.

Residues 75–77 and 113–114 contribute to the substrate site; these read LCH and ME. Asp128 is a catalytic residue.

The protein belongs to the MoaC family. In terms of assembly, homohexamer; trimer of dimers.

It carries out the reaction (8S)-3',8-cyclo-7,8-dihydroguanosine 5'-triphosphate = cyclic pyranopterin phosphate + diphosphate. It participates in cofactor biosynthesis; molybdopterin biosynthesis. Catalyzes the conversion of (8S)-3',8-cyclo-7,8-dihydroguanosine 5'-triphosphate to cyclic pyranopterin monophosphate (cPMP). The sequence is that of Cyclic pyranopterin monophosphate synthase from Salmonella typhi.